Consider the following 350-residue polypeptide: FAD:protein FMN transferase (350 aa).

The N-terminal stretch at 1–19 is a signal peptide; it reads MDMTFFRAALLGACVLLSG. Cys20 carries N-palmitoyl cysteine lipidation. Cys20 carries S-diacylglycerol cysteine lipidation. FAD contacts are provided by residues Met41, Trp78, 119-121, and Asp181; that span reads AMD. Position 184 (Thr184) interacts with Mg(2+). Residues Glu187 and Ile272 each contribute to the FAD site. The Mg(2+) site is built by Asp298, Asp301, and Thr302.

The protein belongs to the ApbE family. Mg(2+) is required as a cofactor.

The protein resides in the cell inner membrane. It carries out the reaction L-threonyl-[protein] + FAD = FMN-L-threonyl-[protein] + AMP + H(+). In terms of biological role, flavin transferase that catalyzes the transfer of the FMN moiety of FAD and its covalent binding to the hydroxyl group of a threonine residue in a target flavoprotein such as NqrB and NqrC, two subunits of the NQR complex. The chain is FAD:protein FMN transferase from Klebsiella pneumoniae (strain 342).